Here is a 257-residue protein sequence, read N- to C-terminus: Golgi SNAP receptor complex member 1-2 (257 aa).

The Cytoplasmic segment spans residues 1-235; the sequence is MTESSLDLQE…GSIKRKRSRD (235 aa). A Phosphoserine modification is found at Asn51. Residues 113-147 adopt a coiled-coil conformation; sequence TQKLARHRDILHEYTQEFRRIKGNINSLREHAELL. Residues 236–256 form a helical; Anchor for type IV membrane protein membrane-spanning segment; it reads TLILSAVIAACTLFLIIYWLS. A topological domain (vesicular) is located at residue Lys257.

This sequence belongs to the GOSR1 family. Component of several multiprotein Golgi SNARE complexes.

Its subcellular location is the golgi apparatus membrane. It is found in the endoplasmic reticulum membrane. Its function is as follows. Involved in transport from the ER to the Golgi apparatus as well as in intra-Golgi transport. It belongs to a super-family of proteins called t-SNAREs or soluble NSF (N-ethylmaleimide-sensitive factor) attachment protein receptor. This chain is Golgi SNAP receptor complex member 1-2 (GOS12), found in Arabidopsis thaliana (Mouse-ear cress).